Here is a 127-residue protein sequence, read N- to C-terminus: Small ribosomal subunit protein uS13 (127 aa).

A disordered region spans residues 93–127; sequence RRSLPVRGQRTHTNARTRKGPRRGTVAGKKKATKT.

Belongs to the universal ribosomal protein uS13 family. As to quaternary structure, part of the 30S ribosomal subunit. Forms a loose heterodimer with protein S19. Forms two bridges to the 50S subunit in the 70S ribosome.

Its function is as follows. Located at the top of the head of the 30S subunit, it contacts several helices of the 16S rRNA. In the 70S ribosome it contacts the 23S rRNA (bridge B1a) and protein L5 of the 50S subunit (bridge B1b), connecting the 2 subunits; these bridges are implicated in subunit movement. Contacts the tRNAs in the A and P-sites. The polypeptide is Small ribosomal subunit protein uS13 (Acidobacterium capsulatum (strain ATCC 51196 / DSM 11244 / BCRC 80197 / JCM 7670 / NBRC 15755 / NCIMB 13165 / 161)).